The chain runs to 301 residues: Zinc finger protein LEE1 (301 aa).

Residues 1–25 (MDAFENMSVSNHPGGNARRNSQSAN) form a disordered region. Residues 7-25 (MSVSNHPGGNARRNSQSAN) are compositionally biased toward polar residues. Residues serine 21 and serine 30 each carry the phosphoserine modification. C3H1-type zinc fingers lie at residues 87–114 (DYSH…HSPD) and 123–145 (PCKY…HVLP). Serine 282 carries the phosphoserine modification.

This is Zinc finger protein LEE1 (LEE1) from Saccharomyces cerevisiae (strain ATCC 204508 / S288c) (Baker's yeast).